The sequence spans 787 residues: LPS-assembly protein LptD (787 aa).

The disordered stretch occupies residues M1–G78. Low complexity predominate over residues L59–G78.

It belongs to the LptD family. In terms of assembly, component of the lipopolysaccharide transport and assembly complex. Interacts with LptE and LptA.

In terms of biological role, together with LptE, is involved in the assembly of lipopolysaccharide (LPS) at the surface of the outer membrane. The polypeptide is LPS-assembly protein LptD (Aromatoleum aromaticum (strain DSM 19018 / LMG 30748 / EbN1) (Azoarcus sp. (strain EbN1))).